Consider the following 513-residue polypeptide: ATP synthase subunit alpha 2 (513 aa).

Residue 169-176 coordinates ATP; that stretch reads GDRQVGKT.

Belongs to the ATPase alpha/beta chains family. As to quaternary structure, F-type ATPases have 2 components, CF(1) - the catalytic core - and CF(0) - the membrane proton channel. CF(1) has five subunits: alpha(3), beta(3), gamma(1), delta(1), epsilon(1). CF(0) has three main subunits: a(1), b(2) and c(9-12). The alpha and beta chains form an alternating ring which encloses part of the gamma chain. CF(1) is attached to CF(0) by a central stalk formed by the gamma and epsilon chains, while a peripheral stalk is formed by the delta and b chains.

It localises to the cell inner membrane. It catalyses the reaction ATP + H2O + 4 H(+)(in) = ADP + phosphate + 5 H(+)(out). Functionally, produces ATP from ADP in the presence of a proton gradient across the membrane. The alpha chain is a regulatory subunit. This Psychromonas ingrahamii (strain DSM 17664 / CCUG 51855 / 37) protein is ATP synthase subunit alpha 2.